Here is a 300-residue protein sequence, read N- to C-terminus: Flaviolin linalyltransferase (300 aa).

Belongs to the aromatic prenyltransferase family. In terms of assembly, monomer.

The catalysed reaction is flaviolin + (2E)-geranyl diphosphate = 3-linalylflaviolin + diphosphate. Its activity is regulated as follows. Does not require magnesium or any other divalent metal ions for activity. Its function is as follows. Involved in the biosynthesis of furanonaphthoquinone I (FNQ I). Catalyzes C- and O-prenylations of different phenolic substrates. With flaviolin as substrate, catalyzes the formation of a carbon-carbon-bond between C-3 (rather than C-1) of geranyl diphosphate and C-3 of flaviolin. With 1,3-dihydroxynaphthalene and 4-hydroxybenzoate as substrates, catalyzes O-prenylations. The sequence is that of Flaviolin linalyltransferase from Streptomyces virginiae (Streptomyces cinnamonensis).